Here is a 227-residue protein sequence, read N- to C-terminus: Ribosomal RNA large subunit methyltransferase E (227 aa).

S-adenosyl-L-methionine is bound by residues Gly78, Trp80, Asp103, Asp119, and Asp143. The active-site Proton acceptor is the Lys183.

It belongs to the class I-like SAM-binding methyltransferase superfamily. RNA methyltransferase RlmE family.

It is found in the cytoplasm. The enzyme catalyses uridine(2552) in 23S rRNA + S-adenosyl-L-methionine = 2'-O-methyluridine(2552) in 23S rRNA + S-adenosyl-L-homocysteine + H(+). Specifically methylates the uridine in position 2552 of 23S rRNA at the 2'-O position of the ribose in the fully assembled 50S ribosomal subunit. The protein is Ribosomal RNA large subunit methyltransferase E of Rickettsia africae (strain ESF-5).